The primary structure comprises 262 residues: S-methyl-5'-thioadenosine phosphorylase (262 aa).

Residues S12, 54 to 55 (RH), and 87 to 88 (SA) contribute to the phosphate site. M185 provides a ligand contact to substrate. A phosphate-binding site is contributed by T186. Residue 209–211 (DYD) coordinates substrate.

It belongs to the PNP/MTAP phosphorylase family. MTAP subfamily. In terms of assembly, homohexamer. Dimer of a homotrimer.

The catalysed reaction is S-methyl-5'-thioadenosine + phosphate = 5-(methylsulfanyl)-alpha-D-ribose 1-phosphate + adenine. It participates in amino-acid biosynthesis; L-methionine biosynthesis via salvage pathway; S-methyl-5-thio-alpha-D-ribose 1-phosphate from S-methyl-5'-thioadenosine (phosphorylase route): step 1/1. In terms of biological role, catalyzes the reversible phosphorylation of S-methyl-5'-thioadenosine (MTA) to adenine and 5-methylthioribose-1-phosphate. Involved in the breakdown of MTA, a major by-product of polyamine biosynthesis. Responsible for the first step in the methionine salvage pathway after MTA has been generated from S-adenosylmethionine. Has broad substrate specificity with 6-aminopurine nucleosides as preferred substrates. This chain is S-methyl-5'-thioadenosine phosphorylase, found in Thermofilum pendens (strain DSM 2475 / Hrk 5).